A 328-amino-acid chain; its full sequence is Cytochrome c biogenesis protein CcsA (328 aa).

Transmembrane regions (helical) follow at residues 13-33 (ISFS…LVNL), 46-66 (GIVI…IYSG), 73-93 (LYES…VSYF), 101-121 (LNAI…SGLL), 146-166 (MVLG…LLVI), 234-254 (IISL…VWAN), 263-283 (WDPK…YLHI), and 295-315 (AIVA…VNLL).

The protein belongs to the CcmF/CycK/Ccl1/NrfE/CcsA family. May interact with Ccs1.

The protein localises to the plastid. It localises to the chloroplast thylakoid membrane. In terms of biological role, required during biogenesis of c-type cytochromes (cytochrome c6 and cytochrome f) at the step of heme attachment. The sequence is that of Cytochrome c biogenesis protein CcsA from Aethionema cordifolium (Lebanon stonecress).